A 696-amino-acid polypeptide reads, in one-letter code: Gametogenetin-binding protein 2 (696 aa).

Ser360 bears the Phosphoserine mark.

As to quaternary structure, interacts with GGN.

It is found in the cytoplasmic vesicle. Its function is as follows. May be involved in spermatogenesis. This chain is Gametogenetin-binding protein 2 (Ggnbp2), found in Rattus norvegicus (Rat).